The chain runs to 115 residues: Nitrogen regulatory protein P-II 1 (115 aa).

O-UMP-tyrosine is present on tyrosine 54.

It belongs to the P(II) protein family.

Could be involved in the regulation of nitrogen fixation. The chain is Nitrogen regulatory protein P-II 1 from Methanothermobacter thermautotrophicus (strain ATCC 29096 / DSM 1053 / JCM 10044 / NBRC 100330 / Delta H) (Methanobacterium thermoautotrophicum).